A 675-amino-acid polypeptide reads, in one-letter code: Calcium channel YVC1 (675 aa).

The Cytoplasmic portion of the chain corresponds to 1–236 (MVSANGDLHL…PVRLKAPVYQ (236 aa)). The helical transmembrane segment at 237–257 (NYLQMIFSFLFLGLYTLVVNG) threads the bilayer. Topologically, residues 258–295 (KDSERVQSFDLLESIFYVFNTGFILDELTKLYYIGYAH) are vacuolar. Residues 296 to 316 (LSFWNLFNDTTYLIITFAMGF) traverse the membrane as a helical segment. Topologically, residues 317 to 335 (RAMSVTPLNAKYSSEDWDK) are cytoplasmic. Residues 336–355 (ISYRVLSCAAPFVWSRLLLY) form a helical membrane-spanning segment. Residues 356–376 (LESQRFIGIMLVILKHMMKES) are Vacuolar-facing. The helical transmembrane segment at 377-397 (IVFFFLLFLIMIGFTQGFLGL) threads the bilayer. The Cytoplasmic portion of the chain corresponds to 398–405 (DSADGKRD). A helical membrane pass occupies residues 406–426 (ITGPILGNLTITVLGLGSFDV). At 427–436 (FEEFAPPYAA) the chain is on the vacuolar side. Residues 437-457 (ILYYGYYFIVSVILLNILIAL) form a helical membrane-spanning segment. Over 458-675 (YSTAYQKVID…EKLDIKDKKE (218 aa)) the chain is Cytoplasmic. At T636 the chain carries Phosphothreonine.

This sequence belongs to the transient receptor (TC 1.A.4) family.

It localises to the vacuole membrane. In terms of biological role, required for release of calcium ions from the vacuole in response to hyperosmotic shock. This chain is Calcium channel YVC1, found in Saccharomyces cerevisiae (strain ATCC 204508 / S288c) (Baker's yeast).